We begin with the raw amino-acid sequence, 129 residues long: uncharacterized protein (129 aa).

2 helical membrane passes run 35-55 (IVDGAFGPVSLLFWLLGWKIP) and 98-118 (ILLLNALCFRVKILLCAIILL).

It localises to the membrane. This is an uncharacterized protein from Saccharomyces cerevisiae (strain ATCC 204508 / S288c) (Baker's yeast).